The chain runs to 465 residues: Protein hedgehog (465 aa).

Residue Cys-79 is the site of N-palmitoyl cysteine attachment. 7 residues coordinate Ca(2+): Glu-143, Glu-144, Asp-149, Thr-179, Glu-180, Asp-183, and Asp-185. Gly-251 is lipidated: Cholesterol glycine ester.

The protein belongs to the hedgehog family. As to quaternary structure, interacts with shf. In terms of processing, the C-terminal part of the hedgehog protein precursor displays an autoproteolysis activity that results in the cleavage of the full-length protein into two parts (N-product and C-product). In addition, the C-terminal part displays a cholesterol transferase activity that results by the covalent attachment of a cholesterol moiety to the C-terminal of the newly generated N-product. The N-product is the active species in both local and long-range signaling, whereas the C-product has no signaling activity. Cholesterylation is required for N-product targeting to lipid rafts and multimerization. Post-translationally, N-palmitoylation by Rasp of the hedgehog N-product, within the secretory pathway, is required for the embryonic and larval patterning activities of the hedgehog signal.

Its subcellular location is the nucleus. It localises to the cytoplasm. It is found in the cell membrane. The enzyme catalyses glycyl-L-cysteinyl-[protein] + cholesterol + H(+) = [protein]-C-terminal glycyl cholesterol ester + N-terminal L-cysteinyl-[protein]. In terms of biological role, the C-terminal part of the hedgehog protein precursor displays an autoproteolysis activity that results in the cleavage of the full-length protein into two parts (N-product and C-product). In addition, the C-terminal part displays a cholesterol transferase activity that results by the covalent attachment of a cholesterol moiety to the C-terminal of the newly generated N-product. Once cleaved, the C-product has no signaling activity and diffuses from the cell. Functionally, the dually lipidated hedgehog protein N-product is a morphogen which is essential for a variety of patterning events during development. Establishes the anterior-posterior axis of the embryonic segments and patterns the larval imaginal disks. Binds to the patched (ptc) receptor, which functions in association with smoothened (smo), to activate the transcription of target genes wingless (wg), decapentaplegic (dpp) and ptc. In the absence of hh, ptc represses the constitutive signaling activity of smo through fused (fu). Essential component of a signaling pathway which regulates the Duox-dependent gut immune response to bacterial uracil; required to activate Cad99C-dependent endosome formation, norpA-dependent Ca2+ mobilization and p38 MAPK, which are essential steps in the Duox-dependent production of reactive oxygen species (ROS) in response to intestinal bacterial infection. During photoreceptor differentiation, it up-regulates transcription of Ubr3, which in turn promotes the hh-signaling pathway by mediating the ubiquitination and degradation of cos. The polypeptide is Protein hedgehog (Drosophila yakuba (Fruit fly)).